Reading from the N-terminus, the 413-residue chain is Peptidase T (413 aa).

Histidine 81 is a binding site for Zn(2+). The active site involves aspartate 83. Zn(2+) is bound at residue aspartate 143. Residue glutamate 178 is the Proton acceptor of the active site. Residues glutamate 179, aspartate 201, and histidine 383 each coordinate Zn(2+).

Belongs to the peptidase M20B family. It depends on Zn(2+) as a cofactor.

The protein localises to the cytoplasm. The catalysed reaction is Release of the N-terminal residue from a tripeptide.. Its function is as follows. Cleaves the N-terminal amino acid of tripeptides. This Lactococcus lactis subsp. cremoris (Streptococcus cremoris) protein is Peptidase T.